The sequence spans 85 residues: Latartoxin-1a (85 aa).

The N-terminal stretch at 1-19 (MKVLVFAIVCSVLLQVVLS) is a signal peptide. A propeptide spans 20–25 (ADEEAR) (removed in mature form). Residues 22-25 (EEAR) carry the Processing quadruplet motif motif. Cystine bridges form between Cys-27-Cys-42, Cys-34-Cys-47, Cys-41-Cys-64, and Cys-49-Cys-62.

It belongs to the neurotoxin 19 (CSTX) family. Contains 4 disulfide bonds. Post-translationally, cleavage of the propeptide depends on the processing quadruplet motif (XXXR, with at least one of X being E). Expressed by the venom gland.

The protein resides in the secreted. Insect toxin. Causes paralysis in larvae of C.vicina by depolarizing membranes at the neuromuscular junction. This Lachesana tarabaevi (Spider) protein is Latartoxin-1a.